Consider the following 940-residue polypeptide: MDKIEVRGARTHNLKNINLVIPRDKLIVVTGLSGSGKSSLAFDTLYAEGQRRYVESLSAYARQFLSLMEKPDVDHIEGLSPAISIEQKSTSHNPRSTVGTITEIHDYLRLLFARVGEPRCPDHDVPLAAQTVSQMVDNVLSQPEGKRLMLLAPIIKERKGEHTKTLENLASQGYIRARIDGEVCDLSDPPKLELQKKHTIEVVVDRFKVRDDLTQRLAESFETALELSGGTAVVADMDDPKAEELLFSANFACPICGYSMRELEPRLFSFNNPAGACPTCDGLGVQQYFDPDRVIQNPELSLAGGAIRGWDRRNFYYFQMLKSLADHYKFDVEAPWGSLSANVHKVVLYGSGKENIEFKYMNDRGDTSIRRHPFEGVLHNMERRYKETESSAVREELAKFISNRPCASCEGTRLRREARHVYVENTPLPAISDMSIGHAMEFFNNLKLAGQRAKIAEKILKEIGDRLKFLVNVGLNYLTLSRSAETLSGGEAQRIRLASQIGAGLVGVMYVLDEPSIGLHQRDNERLLGTLIHLRDLGNTVIVVEHDEDAIRAADHVIDIGPGAGVHGGEVVAEGPLEAIMAVPESLTGQYMSGKRKIEVPKKRVPANPEKVLKLTGARGNNLKDVTLTLPVGLFTCITGVSGSGKSTLINDTLFPIAQRQLNGATIAEPAPYRDIQGLEHFDKVIDIDQSPIGRTPRSNPATYTGVFTPVRELFAGVPESRARGYTPGRFSFNVRGGRCEACQGDGVIKVEMHFLPDIYVPCDQCKGKRYNRETLEIKYKGKTIHEVLDMTIEEAREFFDAVPALARKLQTLMDVGLTYIRLGQSATTLSGGEAQRVKLARELSKRGTGQTLYILDEPTTGLHFADIQQLLDVLHKLRDQGNTIVVIEHNLDVIKTADWIVDLGPEGGSGGGEILVSGTPETVAECEASHTARFLKPML.

Gly31–Ser38 serves as a coordination point for ATP. The segment at Cys253–Cys280 adopts a C4-type zinc-finger fold. 2 consecutive ABC transporter domains span residues Trp310–Leu587 and Ala607–Lys937. Gly640 to Ser647 provides a ligand contact to ATP. The C4-type zinc finger occupies Cys740–Cys766.

This sequence belongs to the ABC transporter superfamily. UvrA family. Forms a heterotetramer with UvrB during the search for lesions. Interacts with TRCF (Mfd). UvrB and TRCF binding to UvrA could be mutually exclusive.

Its subcellular location is the cytoplasm. Its function is as follows. The UvrABC repair system catalyzes the recognition and processing of DNA lesions. UvrA is an ATPase and a DNA-binding protein. A damage recognition complex composed of 2 UvrA and 2 UvrB subunits scans DNA for abnormalities. When the presence of a lesion has been verified by UvrB, the UvrA molecules dissociate. In Escherichia coli (strain K12), this protein is UvrABC system protein A.